The primary structure comprises 116 residues: uncharacterized protein (116 aa).

A signal peptide spans 1 to 19; sequence MRWDVIILYAISRPYATRR. The segment at 18–50 is disordered; it reads RRTGSHTHPRDSRYIAANQRRPPSACRVGPSPA.

This is an uncharacterized protein from Saccharomyces cerevisiae (strain ATCC 204508 / S288c) (Baker's yeast).